Reading from the N-terminus, the 337-residue chain is 2-oxoglutarate receptor 1 (337 aa).

Residues 1–38 (MIEPLDSPASDSDFLDYPSALGNCTDEQISFKMQYLPV) lie on the Extracellular side of the membrane. Asparagine 23 carries N-linked (GlcNAc...) asparagine glycosylation. Residues 39 to 59 (IYSIIFLVGFPGNTVAISIYI) traverse the membrane as a helical segment. Residues 60–69 (FKMRPWRGST) are Cytoplasmic-facing. Residues 70–90 (VIMLNLALTDLLYLTSLPFLI) form a helical membrane-spanning segment. Residues 91-116 (HYYASGENWIFGDFMCKFIRFGFHFN) are Extracellular-facing. A disulfide bridge connects residues cysteine 106 and cysteine 183. A helical membrane pass occupies residues 117-137 (LYSSILFLTCFSLFRYVVIIH). The Cytoplasmic segment spans residues 138–151 (PMSCFSIQKTRWAV). A helical membrane pass occupies residues 152–172 (VACAGVWVISLVAVMPMTFLI). The Extracellular portion of the chain corresponds to 173–200 (TSTTRTNRSACLDLTSSDDLTTIKWYNL). The helical transmembrane segment at 201–221 (ILTATTFCLPLVIVTLCYTTI) threads the bilayer. Residues 222 to 242 (ISTLTHGPRTHSCFKQKARRL) lie on the Cytoplasmic side of the membrane. A helical membrane pass occupies residues 243 to 263 (TILLLLVFYICFLPFHILRVI). The Extracellular segment spans residues 264-284 (RIESRLLSISCSIESHIHEAY). A helical membrane pass occupies residues 285 to 305 (IVSRPLAALNTFGNLLLYVVV). Residues 306-337 (SNNFQQAFCSIVRCKASGDLEQGKKDSCSNNP) are Cytoplasmic-facing.

The protein belongs to the G-protein coupled receptor 1 family. In terms of tissue distribution, predominantly expressed in the kidney with limited expression in the testis and the smooth muscle. Expressed in SLC26A4/pendrin-positive type B and non-A non-B intercalated cells (at protein level).

The protein localises to the cell membrane. Its function is as follows. G protein-coupled receptor for dicarboxylates and amino dicarboxylates. Receptor for itaconate produced by activated macrophages upon bacterial infection. In the respiratory epithelium, couples the binding of itaconate to the activation of GNA11 and downstream intracellular Ca(2+) release, leading to mucocilliary clearance of airborne pathogens. Receptor for leukotriene E4 (LTE4) produced by mast cells upon allergic inflammation. Binds with high affinity to LTE4 and elicits mucin release from pulmonary epithelium in response to airborne fungi allergens. Regulates mucin-producing goblet cell homeostasis. Receptor for alpha-ketoglutarate produced by proximal tubule renal cells upon metabolic alkalosis. In an intrarenal paracrine signaling pathway, binds alpha-ketoglutarate and drives transepithelial salt reabsorption and bicarbonate secretion by SLC26A4/pendrin-positive intercalated cells. This is 2-oxoglutarate receptor 1 (Oxgr1) from Mus musculus (Mouse).